A 446-amino-acid polypeptide reads, in one-letter code: tRNA modification GTPase MnmE (446 aa).

Positions 22, 80, and 119 each coordinate (6S)-5-formyl-5,6,7,8-tetrahydrofolate. Residues 215 to 370 form the TrmE-type G domain; the sequence is GLSLVIAGRP…LKKVIKQVVG (156 aa). Asparagine 225 is a K(+) binding site. Residues 225-230, 244-250, and 269-272 each bind GTP; these read NAGKST, TEIAGTT, and DTAG. Serine 229 is a Mg(2+) binding site. K(+) is bound by residues threonine 244, isoleucine 246, and threonine 249. Threonine 250 serves as a coordination point for Mg(2+). Lysine 446 serves as a coordination point for (6S)-5-formyl-5,6,7,8-tetrahydrofolate.

This sequence belongs to the TRAFAC class TrmE-Era-EngA-EngB-Septin-like GTPase superfamily. TrmE GTPase family. As to quaternary structure, homodimer. Heterotetramer of two MnmE and two MnmG subunits. It depends on K(+) as a cofactor.

Its subcellular location is the cytoplasm. Its function is as follows. Exhibits a very high intrinsic GTPase hydrolysis rate. Involved in the addition of a carboxymethylaminomethyl (cmnm) group at the wobble position (U34) of certain tRNAs, forming tRNA-cmnm(5)s(2)U34. The polypeptide is tRNA modification GTPase MnmE (Legionella pneumophila (strain Paris)).